A 179-amino-acid chain; its full sequence is Large ribosomal subunit protein uL6 (179 aa).

Belongs to the universal ribosomal protein uL6 family. As to quaternary structure, part of the 50S ribosomal subunit.

Functionally, this protein binds to the 23S rRNA, and is important in its secondary structure. It is located near the subunit interface in the base of the L7/L12 stalk, and near the tRNA binding site of the peptidyltransferase center. This Leptospira borgpetersenii serovar Hardjo-bovis (strain JB197) protein is Large ribosomal subunit protein uL6.